A 750-amino-acid polypeptide reads, in one-letter code: MTIRSPEPEVKILVERDPVKTSLEKWAQPGHFSRTLAKGPNTTTWIWNLHADSHDFDSHTNDLEEISRKVFSAHFGQLAIIFVWLSGMYFHGARFSNYEAWLSDPIHIKPSAQVVWPIVGQEILNGDVGGGFQGIQITSGFFQIWRASGITSELQLYCTAIGALIFATLMLFAGWFHYHKAAPKLAWFQDVESMLNHHLAGLLGLGSLAWAGHQVHVSLPINQLLDAGVDPKEIPLPHEFILNRDLLAQLYPSFAKGLIPFFTLNWSEYSDFLTFRGGLNPVTGGLWLTDTVHHHLAIAVLFLVAGHMYRTNWSIGHSIKEILEAHEGPFTGEGHKGIFEILTTSWHAQLALNLAMLGSLTIIVAHHMYSMPPYPYLAIDYGTQLSLFTHHMWIGGFLVVGAAAHAAIFMVRDYDPTTQYNNLLDRVLRHRDAIISHLNWVCIFLGFHSFGLYIHNDTMSALGRPQDMFSDTAIQLQPIFAQWVQNTHASAPGLTAPNAIASTSLTWGGDNLIAVGGKVALLPIPLGTADFLVHHIHAFTIHVTVLILLKGVLFARSSRLIPDKANLGFRFPCDGPGRGGTCQVSAWDHVFLGLFWMYNSISIVIFHFSWKMQSDVWGSINDQGVINHITGGNFAQSSTTINGWLRDFLWAQASQVIQSYGSSLSAYGLLFLGAHFVWAFSLMFLFSGRGYWQELIESIIWAHNKLKVAPAIQPRALSIVQGRAVGVAHYLLGGIATTWAFFLARIIAVG.

8 helical membrane passes run 70–93 (VFSAHFGQLAIIFVWLSGMYFHGA), 156–179 (LYCTAIGALIFATLMLFAGWFHYH), 195–219 (LNHHLAGLLGLGSLAWAGHQVHVSL), 291–309 (TVHHHLAIAVLFLVAGHMY), 346–369 (WHAQLALNLAMLGSLTIIVAHHMY), 385–411 (LSLFTHHMWIGGFLVVGAAAHAAIFMV), 433–455 (AIISHLNWVCIFLGFHSFGLYIH), and 531–549 (FLVHHIHAFTIHVTVLILL). Residues cysteine 573 and cysteine 582 each coordinate [4Fe-4S] cluster. 2 helical membrane-spanning segments follow: residues 589–610 (HVFLGLFWMYNSISIVIFHFSW) and 664–686 (LSAYGLLFLGAHFVWAFSLMFLF). Histidine 675 lines the chlorophyll a' pocket. Chlorophyll a contacts are provided by methionine 683 and tyrosine 691. Position 692 (tryptophan 692) interacts with phylloquinone. A helical transmembrane segment spans residues 724-744 (AVGVAHYLLGGIATTWAFFLA).

It belongs to the PsaA/PsaB family. In terms of assembly, the PsaA/B heterodimer binds the P700 chlorophyll special pair and subsequent electron acceptors. PSI consists of a core antenna complex that captures photons, and an electron transfer chain that converts photonic excitation into a charge separation. The eukaryotic PSI reaction center is composed of at least 11 subunits. The cofactor is P700 is a chlorophyll a/chlorophyll a' dimer, A0 is one or more chlorophyll a, A1 is one or both phylloquinones and FX is a shared 4Fe-4S iron-sulfur center..

The protein resides in the plastid. The protein localises to the chloroplast thylakoid membrane. It carries out the reaction reduced [plastocyanin] + hnu + oxidized [2Fe-2S]-[ferredoxin] = oxidized [plastocyanin] + reduced [2Fe-2S]-[ferredoxin]. Functionally, psaA and PsaB bind P700, the primary electron donor of photosystem I (PSI), as well as the electron acceptors A0, A1 and FX. PSI is a plastocyanin-ferredoxin oxidoreductase, converting photonic excitation into a charge separation, which transfers an electron from the donor P700 chlorophyll pair to the spectroscopically characterized acceptors A0, A1, FX, FA and FB in turn. Oxidized P700 is reduced on the lumenal side of the thylakoid membrane by plastocyanin. This is Photosystem I P700 chlorophyll a apoprotein A1 from Psilotum nudum (Whisk fern).